The primary structure comprises 245 residues: Orotidine 5'-phosphate decarboxylase (245 aa).

Substrate contacts are provided by residues aspartate 22, lysine 44, aspartate 71–threonine 80, threonine 131, arginine 192, glutamine 201, glycine 221, and arginine 222. Lysine 73 (proton donor) is an active-site residue.

It belongs to the OMP decarboxylase family. Type 1 subfamily. Homodimer.

The catalysed reaction is orotidine 5'-phosphate + H(+) = UMP + CO2. Its pathway is pyrimidine metabolism; UMP biosynthesis via de novo pathway; UMP from orotate: step 2/2. Its function is as follows. Catalyzes the decarboxylation of orotidine 5'-monophosphate (OMP) to uridine 5'-monophosphate (UMP). The chain is Orotidine 5'-phosphate decarboxylase from Shigella flexneri.